The primary structure comprises 657 residues: Knob-associated histidine-rich protein (657 aa).

An N-terminal signal peptide occupies residues 1–34; sequence MKSFKNKNTLRRKKAFPVFTKILLVSFLVWVLKC. Asn42 carries N-linked (GlcNAc...) asparagine glycosylation. The span at 57–76 shows a compositional bias: basic residues; that stretch reads AQKQHEHHHHHHHHHHHQHQ. Disordered regions lie at residues 57–138, 282–301, and 352–657; these read AQKQ…PSNE, AHDG…SEGY, and VNKY…GCCG. Positions 99-108 are enriched in low complexity; that stretch reads PQVHQQVHGQ. Residues 112–123 show a composition bias toward basic residues; sequence HHHHHHHHHHLH. 2 stretches are compositionally biased toward basic and acidic residues: residues 357–378 and 399–408; these read KHGD…EGEK and KDNEDAESVK. The span at 409 to 425 shows a compositional bias: basic residues; it reads SKKHKSHDCEKKKSKKH. Residues 426-435 show a composition bias toward basic and acidic residues; sequence KDNEDAESVK. The segment covering 453 to 468 has biased composition (basic residues); the sequence is AAKKLTKKIKIKKKTN. The segment covering 473–496 has biased composition (basic and acidic residues); the sequence is DGSKAHEKKENETKNTAGENKKVD. The segment covering 497-508 has biased composition (polar residues); that stretch reads STSADNKSTNAA. 2 stretches are compositionally biased toward basic and acidic residues: residues 512-523 and 551-578; these read AKDKTQGGKTDK and STSK…EATK. A compositionally biased stretch (low complexity) spans 590-614; the sequence is ASTTEGATKGASTTAGSTTGATTGA. Polar residues predominate over residues 628-643; it reads AANNGEQVMSRGQAQL. A compositionally biased stretch (basic residues) spans 648–657; that stretch reads KKKKKRGCCG.

It localises to the secreted. KAHRP might mimick human histidine-rich glycoproteins to anchor host thrombospondin or a parasite analog in a binding complex with the endothelial cell receptor. In Plasmodium falciparum (isolate NF7 / Ghana), this protein is Knob-associated histidine-rich protein (SD17).